Consider the following 225-residue polypeptide: Ribonuclease 3 (225 aa).

Positions 4 to 127 (IEKLEQSLTY…IIGAIHLEAG (124 aa)) constitute an RNase III domain. Glu-40 lines the Mg(2+) pocket. Asp-44 is a catalytic residue. Mg(2+) contacts are provided by Asp-113 and Glu-116. The active site involves Glu-116. The DRBM domain maps to 154–223 (DYKTKLQEIT…AKIALEKLGS (70 aa)).

It belongs to the ribonuclease III family. Homodimer. The cofactor is Mg(2+).

The protein localises to the cytoplasm. It catalyses the reaction Endonucleolytic cleavage to 5'-phosphomonoester.. In terms of biological role, digests double-stranded RNA. Involved in the processing of primary rRNA transcript to yield the immediate precursors to the large and small rRNAs (23S and 16S). Processes some mRNAs, and tRNAs when they are encoded in the rRNA operon. Processes pre-crRNA and tracrRNA of type II CRISPR loci if present in the organism. The sequence is that of Ribonuclease 3 from Campylobacter jejuni subsp. doylei (strain ATCC BAA-1458 / RM4099 / 269.97).